Reading from the N-terminus, the 235-residue chain is Regulator of G-protein signaling 18 (235 aa).

Ser-49 bears the Phosphoserine mark. The RGS domain maps to 86–202 (SFDKLLSHRD…LKSDIYLDLM (117 aa)). Residues Ser-216 and Ser-218 each carry the phosphoserine modification.

As to expression, expressed in peripheral leukocytes, bone marrow, platelet, spleen and fetal liver.

Its subcellular location is the cytoplasm. Its function is as follows. Inhibits signal transduction by increasing the GTPase activity of G protein alpha subunits thereby driving them into their inactive GDP-bound form. Binds to G(i) alpha-1, G(i) alpha-2, G(i) alpha-3 and G(q) alpha. The protein is Regulator of G-protein signaling 18 (RGS18) of Homo sapiens (Human).